The sequence spans 359 residues: 3-isopropylmalate dehydrogenase (359 aa).

Positions 97, 107, 135, and 224 each coordinate substrate. Mg(2+) is bound by residues Asp224, Asp248, and Asp252. 282-294 is an NAD(+) binding site; sequence GSAPDIAGKDIAN.

It belongs to the isocitrate and isopropylmalate dehydrogenases family. LeuB type 1 subfamily. Homodimer. The cofactor is Mg(2+). Mn(2+) serves as cofactor.

It is found in the cytoplasm. The enzyme catalyses (2R,3S)-3-isopropylmalate + NAD(+) = 4-methyl-2-oxopentanoate + CO2 + NADH. The protein operates within amino-acid biosynthesis; L-leucine biosynthesis; L-leucine from 3-methyl-2-oxobutanoate: step 3/4. In terms of biological role, catalyzes the oxidation of 3-carboxy-2-hydroxy-4-methylpentanoate (3-isopropylmalate) to 3-carboxy-4-methyl-2-oxopentanoate. The product decarboxylates to 4-methyl-2 oxopentanoate. This is 3-isopropylmalate dehydrogenase from Prochlorococcus marinus (strain NATL2A).